The following is a 325-amino-acid chain: Casein kinase I isoform alpha (325 aa).

Alanine 2 carries the post-translational modification N-acetylalanine. Serine 4 carries the post-translational modification Phosphoserine. Lysine 8 is modified (N6-acetyllysine). A Protein kinase domain is found at 17 to 285 (YKLVRKIGSG…YLRQLFRILF (269 aa)). ATP contacts are provided by residues 23–31 (IGSGSFGDI) and lysine 46. The active-site Proton acceptor is the aspartate 136.

It belongs to the protein kinase superfamily. CK1 Ser/Thr protein kinase family. Casein kinase I subfamily. In terms of assembly, interacts with the Axin complex. Interacts with TUT1, leading to TUT1 phosphorylation. Interacts with FAM83A, FAM83B, FAM83C, FAM83D, FAM83E, FAM83F, FAM83G and FAM83H (via DUF1669). Interaction with FAM83H recruits CSNK1A1 to keratin filaments. Post-translationally, phosphorylated by MTOR in response to mitogenic stimulation, leading to its activation.

Its subcellular location is the cytoplasm. The protein localises to the cytoskeleton. It is found in the microtubule organizing center. The protein resides in the centrosome. It localises to the chromosome. Its subcellular location is the centromere. The protein localises to the kinetochore. It is found in the nucleus speckle. The protein resides in the cilium basal body. It localises to the spindle. It carries out the reaction L-seryl-[protein] + ATP = O-phospho-L-seryl-[protein] + ADP + H(+). The enzyme catalyses L-threonyl-[protein] + ATP = O-phospho-L-threonyl-[protein] + ADP + H(+). Functionally, casein kinases are operationally defined by their preferential utilization of acidic proteins such as caseins as substrates. Can phosphorylate a large number of proteins. Participates in Wnt signaling. Phosphorylates CTNNB1 at 'Ser-45'. May phosphorylate PER1 and PER2. May play a role in segregating chromosomes during mitosis. May play a role in keratin cytoskeleton disassembly and thereby, it may regulate epithelial cell migration. Acts as a positive regulator of mTORC1 and mTORC2 signaling in response to nutrients by mediating phosphorylation of DEPTOR inhibitor. Acts as an inhibitor of NLRP3 inflammasome assembly by mediating phosphorylation of NLRP3. In Oryctolagus cuniculus (Rabbit), this protein is Casein kinase I isoform alpha (CSNK1A1).